We begin with the raw amino-acid sequence, 225 residues long: UPF0758 protein BCE33L4198 (225 aa).

The MPN domain occupies 103–225 (SIRNPEDCAR…FVSLKEKGHI (123 aa)). Residues His-174, His-176, and Asp-187 each coordinate Zn(2+). A JAMM motif motif is present at residues 174-187 (HNHPSGDPAPSRED).

Belongs to the UPF0758 family.

This Bacillus cereus (strain ZK / E33L) protein is UPF0758 protein BCE33L4198.